Reading from the N-terminus, the 135-residue chain is MSLRTLVLLKPDAVRRGLVGAILSRYEAKGLTIVAMEQRTIDAAVADQHYAEHVAKEFYPPLRDFVTGGPLVALVLEGDNSVDVVRLLNGATDGSKAAPGTIRGDFSLSNRENLVHGSDSPESAEREIGIWFPGL.

Lys-10, Phe-58, Arg-86, Thr-92, Arg-103, and Asn-113 together coordinate ATP. His-116 (pros-phosphohistidine intermediate) is an active-site residue.

Belongs to the NDK family. Homotetramer. Mg(2+) is required as a cofactor.

The protein resides in the cytoplasm. It carries out the reaction a 2'-deoxyribonucleoside 5'-diphosphate + ATP = a 2'-deoxyribonucleoside 5'-triphosphate + ADP. The catalysed reaction is a ribonucleoside 5'-diphosphate + ATP = a ribonucleoside 5'-triphosphate + ADP. Functionally, major role in the synthesis of nucleoside triphosphates other than ATP. The ATP gamma phosphate is transferred to the NDP beta phosphate via a ping-pong mechanism, using a phosphorylated active-site intermediate. This chain is Nucleoside diphosphate kinase, found in Nocardioides sp. (strain ATCC BAA-499 / JS614).